We begin with the raw amino-acid sequence, 315 residues long: Probable cell division protein kinase ECU11_1290 (315 aa).

The Protein kinase domain occupies 13–294 (YEKVCRISSG…ASQGLCSGFV (282 aa)). Residues 19–27 (ISSGSFGNV) and Lys42 contribute to the ATP site. Residue Asp138 is the Proton acceptor of the active site.

Belongs to the protein kinase superfamily. CMGC Ser/Thr protein kinase family. CDC2/CDKX subfamily.

It is found in the nucleus. It carries out the reaction L-seryl-[protein] + ATP = O-phospho-L-seryl-[protein] + ADP + H(+). The enzyme catalyses L-threonyl-[protein] + ATP = O-phospho-L-threonyl-[protein] + ADP + H(+). May play a role in the control of the eukaryotic cell cycle. This is Probable cell division protein kinase ECU11_1290 from Encephalitozoon cuniculi (strain GB-M1) (Microsporidian parasite).